The following is a 517-amino-acid chain: UPF0522 protein B (517 aa).

Residues 1 to 19 (MNKTIILLLISIIFEIVIS) form the signal peptide. N-linked (GlcNAc...) asparagine glycosylation is found at asparagine 148, asparagine 245, asparagine 333, asparagine 345, asparagine 370, asparagine 423, asparagine 432, and asparagine 495.

This sequence belongs to the UPF0522 family.

Its subcellular location is the secreted. The polypeptide is UPF0522 protein B (Dictyostelium discoideum (Social amoeba)).